The primary structure comprises 395 residues: GDP-mannose 4,6 dehydratase (395 aa).

Composition is skewed to polar residues over residues 1–13 (MLNT…STSD) and 24–36 (ESSS…QNGT). Residues 1–44 (MLNTRLIAMSTSDGAPETKKQRPESSSNGSKDQNGTEAGAEGDS) are disordered. NADP(+) contacts are provided by residues 53-58 (GITGQD), 109-110 (DM), 131-135 (LAAQS), and Y146. The active site involves T178. Active-site nucleophile residues include E180 and Y202. K206, H232, and R237 together coordinate NADP(+).

This sequence belongs to the NAD(P)-dependent epimerase/dehydratase family. GDP-mannose 4,6-dehydratase subfamily. Requires NADP(+) as cofactor.

The enzyme catalyses GDP-alpha-D-mannose = GDP-4-dehydro-alpha-D-rhamnose + H2O. It functions in the pathway nucleotide-sugar biosynthesis; GDP-L-fucose biosynthesis via de novo pathway; GDP-L-fucose from GDP-alpha-D-mannose: step 1/2. In terms of biological role, catalyzes the conversion of GDP-D-mannose to GDP-4-dehydro-6-deoxy-D-mannose (also known as GDP-4-keto-6-deoxy-D-mannose or GDP-4-dehydro-alpha-D-rhamnose), an essential step in the synthesis of GDP-fucose from GDP-mannose. In Drosophila melanogaster (Fruit fly), this protein is GDP-mannose 4,6 dehydratase (Gmd).